A 91-amino-acid chain; its full sequence is Long neurotoxin OH-57 (91 aa).

Positions 1 to 21 are cleaved as a signal peptide; that stretch reads MKTLLLTLVVVTIVCLDLGYT. 5 disulfides stabilise this stretch: C24-C41, C34-C62, C47-C51, C66-C77, and C78-C83.

The protein belongs to the three-finger toxin family. Long-chain subfamily. Type II alpha-neurotoxin sub-subfamily. In terms of tissue distribution, expressed by the venom gland.

It localises to the secreted. Its function is as follows. Binds with high affinity to muscular (alpha-1/CHRNA1) and neuronal (alpha-7/CHRNA7) nicotinic acetylcholine receptor (nAChR) and inhibits acetylcholine from binding to the receptor, thereby impairing neuromuscular and neuronal transmission. This chain is Long neurotoxin OH-57, found in Ophiophagus hannah (King cobra).